The sequence spans 337 residues: Glyceraldehyde-3-phosphate dehydrogenase 1 (337 aa).

NAD(+) is bound by residues 12 to 13, Asp34, and Arg79; that span reads RI. Residues 150–152, Thr181, 210–211, and Arg233 each bind D-glyceraldehyde 3-phosphate; these read SCT and TG. Residue Cys151 is the Nucleophile of the active site. Residue Asn315 participates in NAD(+) binding.

Belongs to the glyceraldehyde-3-phosphate dehydrogenase family. In terms of assembly, homotetramer.

Its subcellular location is the cytoplasm. The catalysed reaction is D-glyceraldehyde 3-phosphate + phosphate + NAD(+) = (2R)-3-phospho-glyceroyl phosphate + NADH + H(+). It functions in the pathway carbohydrate degradation; glycolysis; pyruvate from D-glyceraldehyde 3-phosphate: step 1/5. The protein is Glyceraldehyde-3-phosphate dehydrogenase 1 (GPD1) of Mucor circinelloides f. lusitanicus (Mucor racemosus var. lusitanicus).